The following is a 26-amino-acid chain: M-lycotoxin-Ls2a (26 aa).

Expressed by the venom gland.

The protein resides in the secreted. It localises to the target cell membrane. Functionally, forms pore that permeabilize the cell membrane. Promotes efflux of calcium from synaptosomes, causes hemolysis, and dissipates voltage gradients across muscle membrane. Potently inhibits the growth of bacteria and yeast. May function both in the prey capture strategy as well as protection from infectious organisms arising from prey ingestion. In Lycosa singoriensis (Wolf spider), this protein is M-lycotoxin-Ls2a.